The chain runs to 154 residues: 6,7-dimethyl-8-ribityllumazine synthase (154 aa).

5-amino-6-(D-ribitylamino)uracil is bound by residues tryptophan 22, 56–58, and 80–82; these read AWE and CVI. 85-86 contributes to the (2S)-2-hydroxy-3-oxobutyl phosphate binding site; that stretch reads DT. The Proton donor role is filled by histidine 88. Residue asparagine 113 participates in 5-amino-6-(D-ribitylamino)uracil binding. Arginine 127 provides a ligand contact to (2S)-2-hydroxy-3-oxobutyl phosphate.

Belongs to the DMRL synthase family. In terms of assembly, forms an icosahedral capsid composed of 60 subunits, arranged as a dodecamer of pentamers.

It carries out the reaction (2S)-2-hydroxy-3-oxobutyl phosphate + 5-amino-6-(D-ribitylamino)uracil = 6,7-dimethyl-8-(1-D-ribityl)lumazine + phosphate + 2 H2O + H(+). Its pathway is cofactor biosynthesis; riboflavin biosynthesis; riboflavin from 2-hydroxy-3-oxobutyl phosphate and 5-amino-6-(D-ribitylamino)uracil: step 1/2. Catalyzes the formation of 6,7-dimethyl-8-ribityllumazine by condensation of 5-amino-6-(D-ribitylamino)uracil with 3,4-dihydroxy-2-butanone 4-phosphate. This is the penultimate step in the biosynthesis of riboflavin. The polypeptide is 6,7-dimethyl-8-ribityllumazine synthase (Xanthomonas oryzae pv. oryzae (strain MAFF 311018)).